A 204-amino-acid polypeptide reads, in one-letter code: Protein G1-like5 (204 aa).

Disordered regions lie at residues 1-45 (MEFV…ESQK) and 157-204 (RARG…GAAA). The span at 26–39 (TGATSASAAGASPS) shows a compositional bias: low complexity. In terms of domain architecture, ALOG spans 40–167 (RYESQKRRDW…ARGVSYEKKK (128 aa)). Residues 165 to 169 (KKKRK) carry the Nuclear localization signal motif.

This sequence belongs to the plant homeotic and developmental regulators ALOG protein family.

The protein resides in the nucleus. Functionally, probable transcription regulator that acts as a developmental regulator by promoting cell growth in response to light. In Oryza sativa subsp. japonica (Rice), this protein is Protein G1-like5 (G1L5).